The primary structure comprises 436 residues: 3-ketoacyl-CoA thiolase (436 aa).

Cys99 serves as the catalytic Acyl-thioester intermediate. Active-site proton acceptor residues include His392 and Cys422.

This sequence belongs to the thiolase-like superfamily. Thiolase family. As to quaternary structure, heterotetramer of two alpha chains (FadJ) and two beta chains (FadI).

Its subcellular location is the cytoplasm. The catalysed reaction is an acyl-CoA + acetyl-CoA = a 3-oxoacyl-CoA + CoA. The protein operates within lipid metabolism; fatty acid beta-oxidation. Its function is as follows. Catalyzes the final step of fatty acid oxidation in which acetyl-CoA is released and the CoA ester of a fatty acid two carbons shorter is formed. In Salmonella typhi, this protein is 3-ketoacyl-CoA thiolase.